A 200-amino-acid polypeptide reads, in one-letter code: dITP/XTP pyrophosphatase (200 aa).

7-12 lines the substrate pocket; it reads TSNKHK. Residues glutamate 38 and aspartate 73 each contribute to the Mg(2+) site. Aspartate 73 acts as the Proton acceptor in catalysis. Residues serine 74, 154-157, lysine 177, and 182-183 contribute to the substrate site; these read FGYD and HR.

This sequence belongs to the HAM1 NTPase family. As to quaternary structure, homodimer. Mg(2+) is required as a cofactor.

It carries out the reaction XTP + H2O = XMP + diphosphate + H(+). The catalysed reaction is dITP + H2O = dIMP + diphosphate + H(+). The enzyme catalyses ITP + H2O = IMP + diphosphate + H(+). In terms of biological role, pyrophosphatase that catalyzes the hydrolysis of nucleoside triphosphates to their monophosphate derivatives, with a high preference for the non-canonical purine nucleotides XTP (xanthosine triphosphate), dITP (deoxyinosine triphosphate) and ITP. Seems to function as a house-cleaning enzyme that removes non-canonical purine nucleotides from the nucleotide pool, thus preventing their incorporation into DNA/RNA and avoiding chromosomal lesions. In Campylobacter jejuni subsp. jejuni serotype O:6 (strain 81116 / NCTC 11828), this protein is dITP/XTP pyrophosphatase.